The chain runs to 259 residues: Phosphatidylglycerol--prolipoprotein diacylglyceryl transferase (259 aa).

4 helical membrane passes run 9-29, 55-75, 92-112, and 117-137; these read IIFSIGPLAVSWYSLSYVVGI, FITYAVIGIIVGGRLGFVLLY, EGGMSFHGGALGVIIAAYLFC, and INFLSLTDIIAPVVPIGLFLG. R138 contacts a 1,2-diacyl-sn-glycero-3-phospho-(1'-sn-glycerol). 3 consecutive transmembrane segments (helical) span residues 172-192, 201-221, and 228-248; these read QLYEAFFEGLVLFCILAYATF, GLNSGIFLIFYALFRIAIEIF, and IGFILDSLTMGQILSVPMLLL.

This sequence belongs to the Lgt family.

It is found in the cell inner membrane. It carries out the reaction L-cysteinyl-[prolipoprotein] + a 1,2-diacyl-sn-glycero-3-phospho-(1'-sn-glycerol) = an S-1,2-diacyl-sn-glyceryl-L-cysteinyl-[prolipoprotein] + sn-glycerol 1-phosphate + H(+). The protein operates within protein modification; lipoprotein biosynthesis (diacylglyceryl transfer). In terms of biological role, catalyzes the transfer of the diacylglyceryl group from phosphatidylglycerol to the sulfhydryl group of the N-terminal cysteine of a prolipoprotein, the first step in the formation of mature lipoproteins. The sequence is that of Phosphatidylglycerol--prolipoprotein diacylglyceryl transferase from Rickettsia felis (strain ATCC VR-1525 / URRWXCal2) (Rickettsia azadi).